The chain runs to 211 residues: Large ribosomal subunit protein uL4 (211 aa).

Residues glycine 46–methionine 55 show a composition bias toward polar residues. Residues glycine 46–histidine 89 are disordered.

The protein belongs to the universal ribosomal protein uL4 family. As to quaternary structure, part of the 50S ribosomal subunit.

One of the primary rRNA binding proteins, this protein initially binds near the 5'-end of the 23S rRNA. It is important during the early stages of 50S assembly. It makes multiple contacts with different domains of the 23S rRNA in the assembled 50S subunit and ribosome. Functionally, forms part of the polypeptide exit tunnel. In Leptospira interrogans serogroup Icterohaemorrhagiae serovar copenhageni (strain Fiocruz L1-130), this protein is Large ribosomal subunit protein uL4.